The chain runs to 391 residues: Phosphoglycerate kinase (391 aa).

Substrate contacts are provided by residues 21 to 23, Arg36, 59 to 62, Arg113, and Arg146; these read DLN and HLGR. ATP-binding positions include Lys197, Glu319, and 345 to 348; that span reads GGDT.

This sequence belongs to the phosphoglycerate kinase family. As to quaternary structure, monomer.

It is found in the cytoplasm. The enzyme catalyses (2R)-3-phosphoglycerate + ATP = (2R)-3-phospho-glyceroyl phosphate + ADP. It functions in the pathway carbohydrate degradation; glycolysis; pyruvate from D-glyceraldehyde 3-phosphate: step 2/5. This is Phosphoglycerate kinase from Stenotrophomonas maltophilia (strain R551-3).